Consider the following 129-residue polypeptide: Histone H2B.1 (129 aa).

The segment covering 1 to 19 (MAPKAEKKPASKAPAEKKP) has biased composition (basic and acidic residues). The interval 1–37 (MAPKAEKKPASKAPAEKKPAAKKTASTDSKKRTKTRK) is disordered. N6-acetyllysine; alternate occurs at positions 7 and 8. Residues lysine 7 and lysine 8 each participate in a glycyl lysine isopeptide (Lys-Gly) (interchain with G-Cter in SUMO); alternate cross-link. Serine 11 carries the phosphoserine modification. The residue at position 12 (lysine 12) is an N6-acetyllysine. Position 17 is an N6-acetyllysine; alternate (lysine 17). Lysine 17 is covalently cross-linked (Glycyl lysine isopeptide (Lys-Gly) (interchain with G-Cter in SUMO); alternate). Lysine 18 participates in a covalent cross-link: Glycyl lysine isopeptide (Lys-Gly) (interchain with G-Cter in SUMO). A Glycyl lysine isopeptide (Lys-Gly) (interchain with G-Cter in ubiquitin) cross-link involves residue lysine 123.

It belongs to the histone H2B family. As to quaternary structure, the nucleosome is a histone octamer containing two molecules each of H2A, H2B, H3 and H4 assembled in one H3-H4 heterotetramer and two H2A-H2B heterodimers. The octamer wraps approximately 147 bp of DNA. Monoubiquitinated by the UBC2-BRE1 complex to form H2BK123ub1. H2BK123ub1 gives a specific tag for epigenetic transcriptional activation and is also prerequisite for H3K4me and H3K79me formation. H2BK123ub1 also modulates the formation of double-strand breaks during meiosis and is a prerequisite for DNA-damage checkpoint activation. In terms of processing, phosphorylated by STE20 to form H2BS10ph during progression through meiotic prophase. May be correlated with chromosome condensation. Post-translationally, acetylated by GCN5 to form H2BK11ac and H2BK16ac. H2BK16ac can also be formed by ESA1. Acetylation of N-terminal lysines and particularly formation of H2BK11acK16ac has a positive effect on transcription. Sumoylation to form H2BK6su or H2BK7su, and probably also H2BK16su or H2BK17su, occurs preferentially near the telomeres and represses gene transcription.

The protein resides in the nucleus. Its subcellular location is the chromosome. Core component of nucleosome. Nucleosomes wrap and compact DNA into chromatin, limiting DNA accessibility to the cellular machineries which require DNA as a template. Histones thereby play a central role in transcription regulation, DNA repair, DNA replication and chromosomal stability. DNA accessibility is regulated via a complex set of post-translational modifications of histones, also called histone code, and nucleosome remodeling. The sequence is that of Histone H2B.1 (HTB1) from Meyerozyma guilliermondii (strain ATCC 6260 / CBS 566 / DSM 6381 / JCM 1539 / NBRC 10279 / NRRL Y-324) (Yeast).